A 308-amino-acid polypeptide reads, in one-letter code: tRNA dimethylallyltransferase (308 aa).

14–21 (GPTASGKT) contributes to the ATP binding site. 16-21 (TASGKT) provides a ligand contact to substrate. 3 interaction with substrate tRNA regions span residues 39–42 (DSAL), 163–167 (QRLAR), and 244–249 (RCVGYR).

The protein belongs to the IPP transferase family. In terms of assembly, monomer. Requires Mg(2+) as cofactor.

It catalyses the reaction adenosine(37) in tRNA + dimethylallyl diphosphate = N(6)-dimethylallyladenosine(37) in tRNA + diphosphate. In terms of biological role, catalyzes the transfer of a dimethylallyl group onto the adenine at position 37 in tRNAs that read codons beginning with uridine, leading to the formation of N6-(dimethylallyl)adenosine (i(6)A). The polypeptide is tRNA dimethylallyltransferase (Shewanella piezotolerans (strain WP3 / JCM 13877)).